The sequence spans 389 residues: NADH-quinone oxidoreductase subunit D (389 aa).

It belongs to the complex I 49 kDa subunit family. NDH-1 is composed of 14 different subunits. Subunits NuoB, C, D, E, F, and G constitute the peripheral sector of the complex.

The protein localises to the cell inner membrane. The enzyme catalyses a quinone + NADH + 5 H(+)(in) = a quinol + NAD(+) + 4 H(+)(out). Its function is as follows. NDH-1 shuttles electrons from NADH, via FMN and iron-sulfur (Fe-S) centers, to quinones in the respiratory chain. The immediate electron acceptor for the enzyme in this species is believed to be ubiquinone. Couples the redox reaction to proton translocation (for every two electrons transferred, four hydrogen ions are translocated across the cytoplasmic membrane), and thus conserves the redox energy in a proton gradient. The chain is NADH-quinone oxidoreductase subunit D from Citrifermentans bemidjiense (strain ATCC BAA-1014 / DSM 16622 / JCM 12645 / Bem) (Geobacter bemidjiensis).